The primary structure comprises 223 residues: Probable amino-acid ABC transporter permease protein PatM (223 aa).

The 192-residue stretch at 19–210 (LGTTMEMATW…GVVVILTRVQ (192 aa)) folds into the ABC transmembrane type-1 domain. 5 helical membrane-spanning segments follow: residues 23–43 (MEMATWGLVFSLILSVILANI), 59–78 (ISFFRGTPLLVQLFLLYYGL), 90–110 (AFSAAVIGLTLHFAAYMAESI), 156–176 (FIDMIKSTSLAFTLGVAEIMA), and 186–206 (FRFFEAFLAVALIYWGVVVIL).

The protein belongs to the binding-protein-dependent transport system permease family. HisMQ subfamily.

Its subcellular location is the cell inner membrane. Its function is as follows. Probably part of a binding-protein-dependent transport system for an amino acid. Probably responsible for the translocation of the substrate across the membrane. This chain is Probable amino-acid ABC transporter permease protein PatM (patM), found in Vibrio harveyi (Beneckea harveyi).